The following is a 95-amino-acid chain: Aspartyl/glutamyl-tRNA(Asn/Gln) amidotransferase subunit C (95 aa).

It belongs to the GatC family. As to quaternary structure, heterotrimer of A, B and C subunits.

It carries out the reaction L-glutamyl-tRNA(Gln) + L-glutamine + ATP + H2O = L-glutaminyl-tRNA(Gln) + L-glutamate + ADP + phosphate + H(+). It catalyses the reaction L-aspartyl-tRNA(Asn) + L-glutamine + ATP + H2O = L-asparaginyl-tRNA(Asn) + L-glutamate + ADP + phosphate + 2 H(+). Its function is as follows. Allows the formation of correctly charged Asn-tRNA(Asn) or Gln-tRNA(Gln) through the transamidation of misacylated Asp-tRNA(Asn) or Glu-tRNA(Gln) in organisms which lack either or both of asparaginyl-tRNA or glutaminyl-tRNA synthetases. The reaction takes place in the presence of glutamine and ATP through an activated phospho-Asp-tRNA(Asn) or phospho-Glu-tRNA(Gln). The protein is Aspartyl/glutamyl-tRNA(Asn/Gln) amidotransferase subunit C of Hyphomonas neptunium (strain ATCC 15444).